Consider the following 313-residue polypeptide: Acetaldehyde dehydrogenase (313 aa).

NAD(+) is bound at residue 12 to 15 (SGNI). Catalysis depends on C132, which acts as the Acyl-thioester intermediate. Residues 163–171 (SAGPGTRAN) and N291 each bind NAD(+).

Belongs to the acetaldehyde dehydrogenase family.

The catalysed reaction is acetaldehyde + NAD(+) + CoA = acetyl-CoA + NADH + H(+). This chain is Acetaldehyde dehydrogenase (bphG), found in Burkholderia cepacia (Pseudomonas cepacia).